Here is a 396-residue protein sequence, read N- to C-terminus: Tyrosine--tRNA ligase (396 aa).

The 'HIGH' region motif lies at 43–52 (PSSPDIHLGH). Residues 227-231 (KMSKS) carry the 'KMSKS' region motif. Residue K230 participates in ATP binding. Residues 338-396 (ICVIDFIIKADLAKSKSEARRLLEQGGVEINSAKISDPGTTVKCGDIIKAGKRRYSKAV) enclose the S4 RNA-binding domain.

Belongs to the class-I aminoacyl-tRNA synthetase family. TyrS type 2 subfamily. In terms of assembly, homodimer.

The protein resides in the cytoplasm. It catalyses the reaction tRNA(Tyr) + L-tyrosine + ATP = L-tyrosyl-tRNA(Tyr) + AMP + diphosphate + H(+). Its function is as follows. Catalyzes the attachment of tyrosine to tRNA(Tyr) in a two-step reaction: tyrosine is first activated by ATP to form Tyr-AMP and then transferred to the acceptor end of tRNA(Tyr). This chain is Tyrosine--tRNA ligase, found in Dehalococcoides mccartyi (strain ATCC BAA-2266 / KCTC 15142 / 195) (Dehalococcoides ethenogenes (strain 195)).